We begin with the raw amino-acid sequence, 328 residues long: Olfactory receptor 13A1 (328 aa).

At 1–43 the chain is on the extracellular side; that stretch reads MKLWMESHLIVPETRPSPRMMSNQTLVTEFILQGFSEHPEYRV. N-linked (GlcNAc...) asparagine glycosylation is present at Asn23. The helical transmembrane segment at 44–64 threads the bilayer; that stretch reads FLFSCFLFLYSGALTGNVLIT. Over 65-72 the chain is Cytoplasmic; the sequence is LAITFNPG. The helical transmembrane segment at 73–93 threads the bilayer; it reads LHAPMYFFLLNLATMDIICTS. The Extracellular portion of the chain corresponds to 94–117; sequence SIMPKALASLVSEESSISYGGCMA. Cys115 and Cys207 are disulfide-bonded. The chain crosses the membrane as a helical span at residues 118 to 138; that stretch reads QLYFLTWAASSELLLLTVMAY. Residues 139–157 lie on the Cytoplasmic side of the membrane; that stretch reads DRYAAICHPLHYSSMMSKV. Residues 158–178 traverse the membrane as a helical segment; it reads FCSGLATAVWLLCAVNTAIHT. Residues 179 to 215 are Extracellular-facing; that stretch reads GLMLRLDFCGPNVIIHFFCEVPPLLLLSCSSTYVNGV. A helical transmembrane segment spans residues 216 to 235; that stretch reads MIVLADAFYGIVNFLMTIAS. Residues 236-255 are Cytoplasmic-facing; it reads YGFIVSSILKVKTAWGRQKA. A helical membrane pass occupies residues 256–276; that stretch reads FSTCSSHLTVVCMYYTAVFYA. The Extracellular portion of the chain corresponds to 277–289; it reads YISPVSGYSAGKS. The helical transmembrane segment at 290–310 threads the bilayer; it reads KLAGLLYTVLSPTLNPLIYTL. Residues 311 to 328 lie on the Cytoplasmic side of the membrane; the sequence is RNKEVKAALRKLFPFFRN.

It belongs to the G-protein coupled receptor 1 family.

It is found in the cell membrane. Odorant receptor. The chain is Olfactory receptor 13A1 (OR13A1) from Homo sapiens (Human).